The sequence spans 211 residues: Ribosomal RNA small subunit methyltransferase G (211 aa).

S-adenosyl-L-methionine contacts are provided by residues Gly74, Leu79, 125 to 126, and Arg140; that span reads AE.

This sequence belongs to the methyltransferase superfamily. RNA methyltransferase RsmG family.

It is found in the cytoplasm. Its function is as follows. Specifically methylates the N7 position of guanine in position 518 of 16S rRNA. This Clavibacter michiganensis subsp. michiganensis (strain NCPPB 382) protein is Ribosomal RNA small subunit methyltransferase G.